Consider the following 717-residue polypeptide: PAN2-PAN3 deadenylation complex subunit PAN3 (717 aa).

The C3H1-type zinc-finger motif lies at 8–37 (WARDVPCRNVIIYGFCKKKTEGCPFKHDDD). The segment at 37–100 (DDIATPTSTP…HTGSKSQVPK (64 aa)) is disordered. A compositionally biased stretch (low complexity) spans 62 to 90 (PSKISVSSLPSLNSQPSSTAPTSAPNATA). Residues 91 to 100 (HTGSKSQVPK) are compositionally biased toward polar residues. A pseudokinase domain region spans residues 323-585 (QLFPSGGNLP…ATIIEKYIGL (263 aa)). ATP-binding positions include arginine 378, 428 to 435 (DYYPNATS), and 482 to 483 (DK). Positions 586–624 (DVVFKVMEAQQTYSEYAENVLSRELENGRLFRLICKLNF) form a coiled coil. The interval 625 to 717 (IFGRVENRLD…VDKTFRAMTL (93 aa)) is knob domain.

It belongs to the protein kinase superfamily. PAN3 family. As to quaternary structure, homodimer. Forms a heterotrimer with a catalytic subunit PAN2 to form the poly(A)-nuclease (PAN) deadenylation complex. Interacts (via PAM-2 motif) with poly(A)-binding protein PAB1 (via PABC domain), conferring substrate specificity of the enzyme complex.

Its subcellular location is the cytoplasm. Regulatory subunit of the poly(A)-nuclease (PAN) deadenylation complex, one of two cytoplasmic mRNA deadenylases involved in mRNA turnover. PAN specifically shortens poly(A) tails of RNA and the activity is stimulated by poly(A)-binding protein PAB1. PAN deadenylation is followed by rapid degradation of the shortened mRNA tails by the CCR4-NOT complex. Deadenylated mRNAs are then degraded by two alternative mechanisms, namely exosome-mediated 3'-5' exonucleolytic degradation, or deadenylation-dependent mRNA decaping and subsequent 5'-3' exonucleolytic degradation by XRN1. May also be involved in post-transcriptional maturation of mRNA poly(A) tails. PAN3 acts as a positive regulator for PAN activity, recruiting the catalytic subunit PAN2 to mRNA via its interaction with RNA and with PAB1. The chain is PAN2-PAN3 deadenylation complex subunit PAN3 from Candida glabrata (strain ATCC 2001 / BCRC 20586 / JCM 3761 / NBRC 0622 / NRRL Y-65 / CBS 138) (Yeast).